A 244-amino-acid polypeptide reads, in one-letter code: Globin-like protein 9 (244 aa).

Positions 1–38 are disordered; that stretch reads MRRMAKYDRSYSMQDAHGPNGLARRGTQRGCSRSKSTR. One can recognise a Globin domain in the interval 47-200; that stretch reads SLTFSQKQAL…LIDELRGGFE (154 aa). H111 and H143 together coordinate heme.

This sequence belongs to the globin family.

This is Globin-like protein 9 from Caenorhabditis briggsae.